Reading from the N-terminus, the 2374-residue chain is Genome polyprotein (2374 aa).

Glycine 115 carries N-myristoyl glycine; by host lipidation. Disordered regions lie at residues 144–176 (GDMPTASTSEAPLGSNKGGSSTSPKSTSNGNVV) and 707–739 (GADGAEVQPAPTSDLSDGNPTTDPAPRDNFDYP). A compositionally biased stretch (low complexity) spans 157 to 174 (GSNKGGSSTSPKSTSNGN). Residues 716-728 (APTSDLSDGNPTT) are compositionally biased toward polar residues. The region spanning 1361–1525 (YSTALSAISL…VAFSAAAALQ (165 aa)) is the SF3 helicase domain. 1387-1394 (GPPGTGKS) contributes to the ATP binding site. Glycine 1600 carries N-myristoyl glycine; by host lipidation. Residues 1649 to 1669 (IFAASSFLSLIAATLTIVRCL) traverse the membrane as a helical segment. Residues 1677–1699 (GAYSGTPVPKPRKKDLPKQPVYS) form a disordered region. Tyrosine 1679 carries the O-(5'-phospho-RNA)-tyrosine modification. One can recognise a Peptidase C3 domain in the interval 1700-1889 (GPVRRQGFDP…FSARLTPERV (190 aa)). Catalysis depends on for protease 3C activity residues histidine 1748, glutamate 1779, and cysteine 1852. Residues 2126–2243 (SNVWSIDYSC…GSNQDFHPRE (118 aa)) enclose the RdRp catalytic domain. Residues aspartate 2132 and aspartate 2229 each act as for RdRp activity in the active site.

As to quaternary structure, interacts with capsid protein VP1. Interacts with capsid protein VP3. Interacts with capsid protein VP0. Interacts with capsid protein VP3. In terms of assembly, interacts with capsid protein VP0. Interacts with capsid protein VP1. As to quaternary structure, homodimer. Interacts with protein 2B. Interacts with protein 2C. Homodimer. Interacts with host ABCD3. Interacts with protein 2A. Interacts with host ACBD3. In terms of assembly, homodimer. Interacts with host ABCD3. Interacts with protein 2A. Interacts with protein 3A. Interacts with protein 3C. Interacts with host ACBD3. As to quaternary structure, homodimer. Interacts with host ABCD3 (via GOLD domain) and PI4KB; these interactions allow the formation of a viral protein/ACBD3/PI4KB complex in order to synthesize PI4P at the viral RNA replication sites. Interacts with protein 2C. Interacts with protein 3C. Protein 3C: Interacts with protein 2A. Protein 3C: Interacts with protein 2C. In terms of processing, specific enzymatic cleavages by the viral protease in vivo yield a variety of precursors and mature proteins. The leader protein-VP0 junction is cleaved by 3C proteinase. The VP1/2A junction is cleaved by the protein 3CD in association with protein 2A. Post-translationally, uridylylated by the polymerase and is covalently linked to the 5'-end of genomic RNA. This uridylylated form acts as a nucleotide-peptide primer for the polymerase.

Its subcellular location is the virion. It is found in the host cytoplasm. It localises to the host cytoplasmic vesicle membrane. The protein localises to the host Golgi apparatus membrane. It catalyses the reaction Selective cleavage of Gln-|-Gly bond in the poliovirus polyprotein. In other picornavirus reactions Glu may be substituted for Gln, and Ser or Thr for Gly.. The catalysed reaction is RNA(n) + a ribonucleoside 5'-triphosphate = RNA(n+1) + diphosphate. The enzyme catalyses ATP + H2O = ADP + phosphate + H(+). Its function is as follows. Required for viral RNA replication and viral RNA encapsidation. Does not have any proteolytic activity. In terms of biological role, forms an icosahedral capsid of pseudo T=3 symmetry with capsid proteins VP0 and VP3. Together they form an icosahedral capsid composed of 60 copies of each VP0, VP1, and VP3. All the three latter proteins contain a beta-sheet structure called beta-barrel jelly roll. Forms an icosahedral capsid of pseudo T=3 symmetry with capsid proteins VP1 and VP3. Together they form an icosahedral capsid composed of 60 copies of each VP0, VP1, and VP3. All the three latter proteins contain a beta-sheet structure called beta-barrel jelly roll. Functionally, forms an icosahedral capsid of pseudo T=3 symmetry with capsid proteins VP0 and VP1. Together they form an icosahedral capsid composed of 60 copies of each VP0, VP1, and VP3. All the three latter proteins contain a beta-sheet structure called beta-barrel jelly roll. Its function is as follows. Required for viral RNA replication. Does not have any proteolytic activity. In terms of biological role, affects membrane integrity and causes an increase in membrane permeability. Induces and associates with structural rearrangements of intracellular membranes. Displays RNA-binding, nucleotide binding and NTPase activities. May play a role in virion morphogenesis and viral RNA encapsidation by interacting with the capsid protein VP3. Functionally, serves as membrane anchor via its hydrophobic domain. Plays an essential role in viral RNA replication by recruiting PI4KB at the viral replication sites, thereby allowing the formation of rearranged membranous structures where viral replication takes place. Its function is as follows. Forms a primer, VPg-pU, which is utilized by the polymerase for the initiation of RNA chains. In terms of biological role, cysteine protease that generates mature viral proteins from the precursor polyprotein. In addition to its proteolytic activity, it binds to viral RNA, and thus influences viral genome replication. RNA and substrate cooperatively bind to the protease. Replicates the genomic and antigenomic RNAs by recognizing replications specific signals. Performs VPg uridylylation. This Salivirus A (isolate Human/Nigeria/NG-J1/2007) (SV-A) protein is Genome polyprotein.